Reading from the N-terminus, the 216-residue chain is Cytidylate kinase (216 aa).

An ATP-binding site is contributed by 7 to 15 (GPSGTGKST).

This sequence belongs to the cytidylate kinase family. Type 1 subfamily.

The protein localises to the cytoplasm. It carries out the reaction CMP + ATP = CDP + ADP. It catalyses the reaction dCMP + ATP = dCDP + ADP. This chain is Cytidylate kinase, found in Chlamydia felis (strain Fe/C-56) (Chlamydophila felis).